Reading from the N-terminus, the 293-residue chain is 33 kDa chaperonin (293 aa).

2 disulfides stabilise this stretch: Cys238-Cys240 and Cys271-Cys274.

It belongs to the HSP33 family. Post-translationally, under oxidizing conditions two disulfide bonds are formed involving the reactive cysteines. Under reducing conditions zinc is bound to the reactive cysteines and the protein is inactive.

Its subcellular location is the cytoplasm. Its function is as follows. Redox regulated molecular chaperone. Protects both thermally unfolding and oxidatively damaged proteins from irreversible aggregation. Plays an important role in the bacterial defense system toward oxidative stress. This is 33 kDa chaperonin from Staphylococcus aureus (strain USA300).